The chain runs to 403 residues: Bifunctional enzyme IspD/IspF (403 aa).

The interval 1–234 is 2-C-methyl-D-erythritol 4-phosphate cytidylyltransferase; that stretch reads MPTSKRTAAI…ARLAAMLGDI (234 aa). The 2-C-methyl-D-erythritol 2,4-cyclodiphosphate synthase stretch occupies residues 235–403; sequence RTGTGYDVHA…SDQEDKGWST (169 aa). A divalent metal cation contacts are provided by Asp241 and His243. Residues 241–243 and 267–268 each bind 4-CDP-2-C-methyl-D-erythritol 2-phosphate; these read DVH and HS. A divalent metal cation is bound at residue His275. Residues 289-291, 365-368, Phe372, and Arg375 each bind 4-CDP-2-C-methyl-D-erythritol 2-phosphate; these read DIG and TTSE.

In the N-terminal section; belongs to the IspD/TarI cytidylyltransferase family. IspD subfamily. This sequence in the C-terminal section; belongs to the IspF family. A divalent metal cation is required as a cofactor.

It carries out the reaction 2-C-methyl-D-erythritol 4-phosphate + CTP + H(+) = 4-CDP-2-C-methyl-D-erythritol + diphosphate. The enzyme catalyses 4-CDP-2-C-methyl-D-erythritol 2-phosphate = 2-C-methyl-D-erythritol 2,4-cyclic diphosphate + CMP. Its pathway is isoprenoid biosynthesis; isopentenyl diphosphate biosynthesis via DXP pathway; isopentenyl diphosphate from 1-deoxy-D-xylulose 5-phosphate: step 2/6. It functions in the pathway isoprenoid biosynthesis; isopentenyl diphosphate biosynthesis via DXP pathway; isopentenyl diphosphate from 1-deoxy-D-xylulose 5-phosphate: step 4/6. Functionally, bifunctional enzyme that catalyzes the formation of 4-diphosphocytidyl-2-C-methyl-D-erythritol from CTP and 2-C-methyl-D-erythritol 4-phosphate (MEP) (IspD), and catalyzes the conversion of 4-diphosphocytidyl-2-C-methyl-D-erythritol 2-phosphate (CDP-ME2P) to 2-C-methyl-D-erythritol 2,4-cyclodiphosphate (ME-CPP) with a corresponding release of cytidine 5-monophosphate (CMP) (IspF). This Nitrobacter hamburgensis (strain DSM 10229 / NCIMB 13809 / X14) protein is Bifunctional enzyme IspD/IspF.